A 350-amino-acid polypeptide reads, in one-letter code: Sperm equatorial segment protein 1 (350 aa).

A signal peptide spans 1-19; the sequence is MKPLVLLVALLLWPSSVPA. N-linked (GlcNAc...) asparagine glycosylation occurs at N128.

Belongs to the SPESP1 family. In terms of processing, glycosylated. In testis there are two predominant forms of 77- and 67-kDa and a form of 47-kDa, whereas in epididymal sperm from caput, corpus, and cauda there are two forms of 47- and 43-kDa. Testis forms contain complex carbohydrate residues. Epididymal sperm forms are N-glycosylated. Then undergoes significant glycosylation in the testis and that the majority of these glycoconjugates are removed by the time sperm reach the caput epididymis. Highly expressed in testis, where it is localized in the acrosome of postmeiotic stages of spermiogenesis (round and elongating spermatids and in ejaculated spermatozoa) (at protein level). Poorly expressed in placenta and fetal lung.

The protein localises to the cytoplasmic vesicle. It localises to the secretory vesicle. It is found in the acrosome. In terms of biological role, involved in fertilization ability of sperm. The sequence is that of Sperm equatorial segment protein 1 from Homo sapiens (Human).